Reading from the N-terminus, the 580-residue chain is Myb-like protein C (580 aa).

Disordered stretches follow at residues 1-58 (MTMI…YGSN), 73-101 (QYSI…TLLS), 121-203 (NVYN…SSTN), and 354-380 (SDND…NPPN). Composition is skewed to low complexity over residues 20 to 47 (NNNN…NNNN), 87 to 101 (NSTM…TLLS), and 126 to 203 (PHQS…SSTN). Residues 361 to 371 (KKKRERIRKSV) show a composition bias toward basic residues. HTH myb-type domains lie at 368-430 (RKSV…CPAI) and 431-482 (RKGS…SREV). DNA-binding regions (H-T-H motif) lie at residues 402–426 (WKKI…KRVL) and 454–478 (WKNV…KSCM). Positions 484-546 (WSSREDEILQ…ECKTRYFQLN (63 aa)) constitute a Myb-like domain.

The protein localises to the nucleus. Transcription activator required for the culmination, at the time of the fruiting body formation. Regulates genes involved in the cell differentiation within the fruiting body. In Dictyostelium discoideum (Social amoeba), this protein is Myb-like protein C (mybC).